Here is a 314-residue protein sequence, read N- to C-terminus: 4-hydroxy-3-methylbut-2-enyl diphosphate reductase (314 aa).

[4Fe-4S] cluster is bound at residue Cys12. Residues His41 and His74 each coordinate (2E)-4-hydroxy-3-methylbut-2-enyl diphosphate. 2 residues coordinate dimethylallyl diphosphate: His41 and His74. 2 residues coordinate isopentenyl diphosphate: His41 and His74. Residue Cys96 coordinates [4Fe-4S] cluster. His124 is a (2E)-4-hydroxy-3-methylbut-2-enyl diphosphate binding site. His124 is a binding site for dimethylallyl diphosphate. His124 is an isopentenyl diphosphate binding site. The active-site Proton donor is the Glu126. Thr167 is a (2E)-4-hydroxy-3-methylbut-2-enyl diphosphate binding site. Cys197 contacts [4Fe-4S] cluster. Residues Ser225, Ser226, Asn227, and Ser269 each contribute to the (2E)-4-hydroxy-3-methylbut-2-enyl diphosphate site. The dimethylallyl diphosphate site is built by Ser225, Ser226, Asn227, and Ser269. 4 residues coordinate isopentenyl diphosphate: Ser225, Ser226, Asn227, and Ser269.

It belongs to the IspH family. The cofactor is [4Fe-4S] cluster.

The catalysed reaction is isopentenyl diphosphate + 2 oxidized [2Fe-2S]-[ferredoxin] + H2O = (2E)-4-hydroxy-3-methylbut-2-enyl diphosphate + 2 reduced [2Fe-2S]-[ferredoxin] + 2 H(+). The enzyme catalyses dimethylallyl diphosphate + 2 oxidized [2Fe-2S]-[ferredoxin] + H2O = (2E)-4-hydroxy-3-methylbut-2-enyl diphosphate + 2 reduced [2Fe-2S]-[ferredoxin] + 2 H(+). It participates in isoprenoid biosynthesis; dimethylallyl diphosphate biosynthesis; dimethylallyl diphosphate from (2E)-4-hydroxy-3-methylbutenyl diphosphate: step 1/1. The protein operates within isoprenoid biosynthesis; isopentenyl diphosphate biosynthesis via DXP pathway; isopentenyl diphosphate from 1-deoxy-D-xylulose 5-phosphate: step 6/6. Catalyzes the conversion of 1-hydroxy-2-methyl-2-(E)-butenyl 4-diphosphate (HMBPP) into a mixture of isopentenyl diphosphate (IPP) and dimethylallyl diphosphate (DMAPP). Acts in the terminal step of the DOXP/MEP pathway for isoprenoid precursor biosynthesis. This chain is 4-hydroxy-3-methylbut-2-enyl diphosphate reductase, found in Histophilus somni (strain 2336) (Haemophilus somnus).